The primary structure comprises 273 residues: Formamidopyrimidine-DNA glycosylase (273 aa).

The active-site Schiff-base intermediate with DNA is the P2. The active-site Proton donor is the E3. K58 acts as the Proton donor; for beta-elimination activity in catalysis. Positions 92, 111, and 153 each coordinate DNA. An FPG-type zinc finger spans residues 238–272; sequence KVYGREGQSCLSCSSTIIKIKHSGRSTFYCKTCQY. The active-site Proton donor; for delta-elimination activity is the R262.

This sequence belongs to the FPG family. In terms of assembly, monomer. Zn(2+) is required as a cofactor.

It carries out the reaction Hydrolysis of DNA containing ring-opened 7-methylguanine residues, releasing 2,6-diamino-4-hydroxy-5-(N-methyl)formamidopyrimidine.. The catalysed reaction is 2'-deoxyribonucleotide-(2'-deoxyribose 5'-phosphate)-2'-deoxyribonucleotide-DNA = a 3'-end 2'-deoxyribonucleotide-(2,3-dehydro-2,3-deoxyribose 5'-phosphate)-DNA + a 5'-end 5'-phospho-2'-deoxyribonucleoside-DNA + H(+). Involved in base excision repair of DNA damaged by oxidation or by mutagenic agents. Acts as a DNA glycosylase that recognizes and removes damaged bases. Has a preference for oxidized purines, such as 7,8-dihydro-8-oxoguanine (8-oxoG). Has AP (apurinic/apyrimidinic) lyase activity and introduces nicks in the DNA strand. Cleaves the DNA backbone by beta-delta elimination to generate a single-strand break at the site of the removed base with both 3'- and 5'-phosphates. The sequence is that of Formamidopyrimidine-DNA glycosylase from Rickettsia peacockii (strain Rustic).